The chain runs to 568 residues: Zinc finger protein 648 (568 aa).

A compositionally biased stretch (basic and acidic residues) spans 1 to 11; that stretch reads MAQVDSQDRWG. Residues 1–106 are disordered; that stretch reads MAQVDSQDRW…MSGKASWSRD (106 aa). C2H2-type zinc fingers lie at residues 279–301, 307–329, 335–358, 364–386, 392–414, 420–442, 448–470, 476–498, 504–526, and 532–554; these read YACE…RRLH, YQCS…IRTH, YPCP…RNMH, FPCS…QRTH, FRCP…QRVH, FPCP…QTLH, FKCA…QRIH, FPCT…QQIH, FLCA…IRMH, and YQCE…RAKH. The tract at residues 548–568 is disordered; the sequence is QRHRAKHGTCKKEPIPSSSDE.

Belongs to the krueppel C2H2-type zinc-finger protein family.

It localises to the nucleus. May be involved in transcriptional regulation. This Homo sapiens (Human) protein is Zinc finger protein 648 (ZNF648).